The sequence spans 180 residues: Large ribosomal subunit protein uL5 (180 aa).

This sequence belongs to the universal ribosomal protein uL5 family. As to quaternary structure, part of the 50S ribosomal subunit; part of the 5S rRNA/L5/L18/L25 subcomplex. Contacts the 5S rRNA and the P site tRNA. Forms a bridge to the 30S subunit in the 70S ribosome.

Functionally, this is one of the proteins that bind and probably mediate the attachment of the 5S RNA into the large ribosomal subunit, where it forms part of the central protuberance. In the 70S ribosome it contacts protein S13 of the 30S subunit (bridge B1b), connecting the 2 subunits; this bridge is implicated in subunit movement. Contacts the P site tRNA; the 5S rRNA and some of its associated proteins might help stabilize positioning of ribosome-bound tRNAs. The polypeptide is Large ribosomal subunit protein uL5 (Roseiflexus sp. (strain RS-1)).